The primary structure comprises 477 residues: 23S rRNA (uracil(1939)-C(5))-methyltransferase RlmD (477 aa).

The 60-residue stretch at 7–66 (KTENFPPDWLLVESLDLEAQGVAHRADGKVVFIKGALPFELVSANVHRKKNNWEQGVVTA) folds into the TRAM domain. 4 residues coordinate [4Fe-4S] cluster: cysteine 79, cysteine 89, cysteine 92, and cysteine 171. Residues glutamine 280, phenylalanine 309, asparagine 314, glutamate 330, asparagine 365, and aspartate 386 each coordinate S-adenosyl-L-methionine. The Nucleophile role is filled by cysteine 432.

This sequence belongs to the class I-like SAM-binding methyltransferase superfamily. RNA M5U methyltransferase family. RlmD subfamily.

The catalysed reaction is uridine(1939) in 23S rRNA + S-adenosyl-L-methionine = 5-methyluridine(1939) in 23S rRNA + S-adenosyl-L-homocysteine + H(+). Catalyzes the formation of 5-methyl-uridine at position 1939 (m5U1939) in 23S rRNA. The sequence is that of 23S rRNA (uracil(1939)-C(5))-methyltransferase RlmD from Albidiferax ferrireducens (strain ATCC BAA-621 / DSM 15236 / T118) (Rhodoferax ferrireducens).